The sequence spans 166 residues: Interferon gamma (166 aa).

A signal peptide spans 1–23 (MKYTSYILAFQLCVVLGSLGCYC). Gln-24 carries the post-translational modification Pyrrolidone carboxylic acid. N-linked (GlcNAc...) asparagine glycans are attached at residues Asn-48, Asn-86, and Asn-120.

The protein belongs to the type II (or gamma) interferon family. In terms of assembly, homodimer. Interacts with IFNGR1 (via extracellular domain); this interaction promotes IFNGR1 dimerization. As to expression, released primarily from activated T lymphocytes.

The protein localises to the secreted. Type II interferon produced by immune cells such as T-cells and NK cells that plays crucial roles in antimicrobial, antiviral, and antitumor responses by activating effector immune cells and enhancing antigen presentation. Primarily signals through the JAK-STAT pathway after interaction with its receptor IFNGR1 to affect gene regulation. Upon IFNG binding, IFNGR1 intracellular domain opens out to allow association of downstream signaling components JAK2, JAK1 and STAT1, leading to STAT1 activation, nuclear translocation and transcription of IFNG-regulated genes. Many of the induced genes are transcription factors such as IRF1 that are able to further drive regulation of a next wave of transcription. Plays a role in class I antigen presentation pathway by inducing a replacement of catalytic proteasome subunits with immunoproteasome subunits. In turn, increases the quantity, quality, and repertoire of peptides for class I MHC loading. Increases the efficiency of peptide generation also by inducing the expression of activator PA28 that associates with the proteasome and alters its proteolytic cleavage preference. Up-regulates as well MHC II complexes on the cell surface by promoting expression of several key molecules such as cathepsins B/CTSB, H/CTSH, and L/CTSL. Participates in the regulation of hematopoietic stem cells during development and under homeostatic conditions by affecting their development, quiescence, and differentiation. The chain is Interferon gamma (IFNG) from Callithrix jacchus (White-tufted-ear marmoset).